The chain runs to 416 residues: Glutamyl-tRNA reductase (416 aa).

Residues 49 to 52, serine 105, 110 to 112, and glutamine 116 contribute to the substrate site; these read TCNR and EPQ. Cysteine 50 functions as the Nucleophile in the catalytic mechanism. An NADP(+)-binding site is contributed by 185 to 190; the sequence is GAGETI.

It belongs to the glutamyl-tRNA reductase family. As to quaternary structure, homodimer.

The enzyme catalyses (S)-4-amino-5-oxopentanoate + tRNA(Glu) + NADP(+) = L-glutamyl-tRNA(Glu) + NADPH + H(+). Its pathway is porphyrin-containing compound metabolism; protoporphyrin-IX biosynthesis; 5-aminolevulinate from L-glutamyl-tRNA(Glu): step 1/2. Its function is as follows. Catalyzes the NADPH-dependent reduction of glutamyl-tRNA(Glu) to glutamate 1-semialdehyde (GSA). This Shewanella frigidimarina (strain NCIMB 400) protein is Glutamyl-tRNA reductase.